Here is a 276-residue protein sequence, read N- to C-terminus: Dermonecrotic toxin LspiSicTox-betaIE4ii (276 aa).

His5 is an active-site residue. Residues Glu25 and Asp27 each coordinate Mg(2+). Catalysis depends on His41, which acts as the Nucleophile. Intrachain disulfides connect Cys45-Cys51 and Cys47-Cys189. Residue Asp85 coordinates Mg(2+).

The protein belongs to the arthropod phospholipase D family. Class II subfamily. It depends on Mg(2+) as a cofactor. As to expression, expressed by the venom gland.

Its subcellular location is the secreted. The enzyme catalyses an N-(acyl)-sphingosylphosphocholine = an N-(acyl)-sphingosyl-1,3-cyclic phosphate + choline. It carries out the reaction an N-(acyl)-sphingosylphosphoethanolamine = an N-(acyl)-sphingosyl-1,3-cyclic phosphate + ethanolamine. It catalyses the reaction a 1-acyl-sn-glycero-3-phosphocholine = a 1-acyl-sn-glycero-2,3-cyclic phosphate + choline. The catalysed reaction is a 1-acyl-sn-glycero-3-phosphoethanolamine = a 1-acyl-sn-glycero-2,3-cyclic phosphate + ethanolamine. Dermonecrotic toxins cleave the phosphodiester linkage between the phosphate and headgroup of certain phospholipids (sphingolipid and lysolipid substrates), forming an alcohol (often choline) and a cyclic phosphate. This toxin acts on sphingomyelin (SM). It may also act on ceramide phosphoethanolamine (CPE), lysophosphatidylcholine (LPC) and lysophosphatidylethanolamine (LPE), but not on lysophosphatidylserine (LPS), and lysophosphatidylglycerol (LPG). It acts by transphosphatidylation, releasing exclusively cyclic phosphate products as second products. Induces dermonecrosis, hemolysis, increased vascular permeability, edema, inflammatory response, and platelet aggregation. In Loxosceles spinulosa (Recluse spider), this protein is Dermonecrotic toxin LspiSicTox-betaIE4ii.